A 603-amino-acid chain; its full sequence is Complement factor I (603 aa).

An N-terminal signal peptide occupies residues 1–18 (MKLAHLSLFLLALHLSSS). Intrachain disulfides connect Cys36-Cys260, Cys46-Cys57, Cys51-Cys62, Cys64-Cys96, Cys70-Cys89, Cys78-Cys109, Cys144-Cys186, Cys157-Cys219, Cys191-Cys201, Cys234-Cys252, Cys246-Cys261, Cys264-Cys276, Cys271-Cys289, Cys283-Cys298, Cys348-Cys473, Cys386-Cys402, Cys394-Cys464, Cys487-Cys551, Cys515-Cys530, and Cys541-Cys570. A Kazal-like domain is found at 58-111 (IEGTCICKLPYQCPRAGTPVCAMNGRSYPTYCHQKSFECLHPEIKFSHNGTCAA). Asn106, Asn116, Asn174, and Asn182 each carry an N-linked (GlcNAc...) asparagine glycan. Residues 117–217 (VSLIYGRTKT…TELSNGLAGV (101 aa)) enclose the SRCR domain. LDL-receptor class A domains follow at residues 218 to 262 (VCYK…LCCK) and 263 to 299 (GCRG…SRCE). Ca(2+) is bound by residues Lys244, Asn247, Val249, Asp251, Asp257, and Glu258. Residue Asn267 is glycosylated (N-linked (GlcNAc...) asparagine). Residues Tyr281, Asn284, Glu286, Asp288, Asp294, and Glu295 each coordinate Ca(2+). Positions 361–594 (VIGGKPANVG…YFDWISYHVG (234 aa)) constitute a Peptidase S1 domain. Residues His401 and Asp449 each act as charge relay system in the active site. A glycan (N-linked (GlcNAc...) asparagine) is linked at Asn514. Ser545 acts as the Charge relay system in catalysis. Asn556 is a glycosylation site (N-linked (GlcNAc...) asparagine).

Belongs to the peptidase S1 family. Heterodimer of a light and heavy chains; disulfide-linked. The fully processed and mature protein circulates as a zymogen, and is allosterically activated by substrate-induced remodeling of the active site. Interacts with C3b. Interacts with complement factor H. As to expression, expressed in the liver by hepatocytes. Also present in other cells such as monocytes, fibroblasts or keratinocytes.

The protein localises to the secreted. The protein resides in the extracellular space. The enzyme catalyses Inactivates complement subcomponents C3b, iC3b and C4b by proteolytic cleavage.. Its function is as follows. Trypsin-like serine protease that plays an essential role in regulating the immune response by controlling all complement pathways. Inhibits these pathways by cleaving three peptide bonds in the alpha-chain of C3b and two bonds in the alpha-chain of C4b thereby inactivating these proteins. Essential cofactors for these reactions include factor H and C4BP in the fluid phase and membrane cofactor protein/CD46 and CR1 on cell surfaces. The presence of these cofactors on healthy cells allows degradation of deposited C3b by CFI in order to prevent undesired complement activation, while in apoptotic cells or microbes, the absence of such cofactors leads to C3b-mediated complement activation and subsequent opsonization. The protein is Complement factor I (Cfi) of Mus musculus (Mouse).